We begin with the raw amino-acid sequence, 655 residues long: Bifunctional lysine-specific demethylase and histidyl-hydroxylase NO66 (655 aa).

Residues 1-16 (MEKVTNSAAAKPQGNN) show a composition bias toward polar residues. 2 disordered regions span residues 1–48 (MEKV…LSDM) and 67–122 (EDTD…QGAS). Over residues 76-86 (STSSKEAAAAK) the composition is skewed to low complexity. Residues 87-96 (TADHERRLQA) show a composition bias toward basic and acidic residues. Residue serine 131 is modified to Phosphoserine. Position 137 is a phosphothreonine (threonine 137). A Phosphoserine modification is found at serine 138. The disordered stretch occupies residues 185–210 (KAPEEGNNNNDEKEMSTETSEPHKTD). Residues 194-210 (NDEKEMSTETSEPHKTD) are compositionally biased toward basic and acidic residues. The region spanning 307–452 (CSIRLLHASA…NLLETLMPMV (146 aa)) is the JmjC domain. Fe cation-binding residues include histidine 353, aspartate 355, and histidine 418.

The protein belongs to the ROX family. NO66 subfamily. It depends on Fe(2+) as a cofactor.

The protein localises to the nucleus. The catalysed reaction is N(6),N(6)-dimethyl-L-lysyl(36)-[histone H3] + 2 2-oxoglutarate + 2 O2 = L-lysyl(36)-[histone H3] + 2 formaldehyde + 2 succinate + 2 CO2. Functionally, oxygenase that can act as both a histone lysine demethylase and a ribosomal histidine hydroxylase. Specifically demethylates 'Lys-4' (H3K4me) and 'Lys-36' (H3K36me) of histone H3, thereby playing a central role in histone code. This chain is Bifunctional lysine-specific demethylase and histidyl-hydroxylase NO66, found in Drosophila sechellia (Fruit fly).